Consider the following 213-residue polypeptide: Large ribosomal subunit protein uL1 (213 aa).

It belongs to the universal ribosomal protein uL1 family. As to quaternary structure, part of the 50S ribosomal subunit.

Its function is as follows. Probably involved in E site tRNA release. Binds directly to 23S rRNA. In terms of biological role, protein L1 is also a translational repressor protein, it controls the translation of the L1 operon by binding to its mRNA. Thus it also controls transcription of L10 and L12 by translational coupling. Unlike the case in E.coli, where the site is in the untranslated mRNA leader, this site is within the L1 protein's structural gene. This is Large ribosomal subunit protein uL1 from Methanococcus vannielii (strain ATCC 35089 / DSM 1224 / JCM 13029 / OCM 148 / SB).